We begin with the raw amino-acid sequence, 281 residues long: Probable feruloyl esterase A (281 aa).

Positions 1–21 are cleaved as a signal peptide; sequence MKQFSAKYALILLATAGQALA. 3 disulfides stabilise this stretch: C50-C279, C112-C115, and C248-C255. D98 serves as a coordination point for substrate. A glycan (N-linked (GlcNAc...) asparagine) is linked at N100. Y101 provides a ligand contact to substrate. S154 functions as the Nucleophile in the catalytic mechanism. D215 (charge relay system) is an active-site residue. H268 is a substrate binding site. The Charge relay system role is filled by H268.

This sequence belongs to the AB hydrolase superfamily. FaeA family.

The protein resides in the secreted. It carries out the reaction feruloyl-polysaccharide + H2O = ferulate + polysaccharide.. Involved in degradation of plant cell walls. Hydrolyzes the feruloyl-arabinose ester bond in arabinoxylans, and the feruloyl-galactose ester bond in pectin. The polypeptide is Probable feruloyl esterase A (faeA) (Aspergillus niger (strain ATCC MYA-4892 / CBS 513.88 / FGSC A1513)).